A 499-amino-acid chain; its full sequence is Phenylalanine--tRNA ligase alpha subunit (499 aa).

L-phenylalanine contacts are provided by residues Thr342, 381-383 (QID), and Phe422. Glu424 serves as a coordination point for Mg(2+). Residue Phe447 coordinates L-phenylalanine.

The protein belongs to the class-II aminoacyl-tRNA synthetase family. Phe-tRNA synthetase alpha subunit type 2 subfamily. In terms of assembly, tetramer of two alpha and two beta subunits. It depends on Mg(2+) as a cofactor.

The protein localises to the cytoplasm. The catalysed reaction is tRNA(Phe) + L-phenylalanine + ATP = L-phenylalanyl-tRNA(Phe) + AMP + diphosphate + H(+). This Thermococcus gammatolerans (strain DSM 15229 / JCM 11827 / EJ3) protein is Phenylalanine--tRNA ligase alpha subunit.